A 342-amino-acid chain; its full sequence is Probable dual-specificity RNA methyltransferase RlmN (342 aa).

Residue Glu-91 is the Proton acceptor of the active site. The 231-residue stretch at 97–327 (YKHGNSICVS…TTIRREMGAD (231 aa)) folds into the Radical SAM core domain. A disulfide bond links Cys-104 and Cys-332. Residues Cys-111, Cys-115, and Cys-118 each coordinate [4Fe-4S] cluster. S-adenosyl-L-methionine-binding positions include 158 to 159 (GE), Ser-190, 213 to 215 (SLH), and Asn-289. The active-site S-methylcysteine intermediate is Cys-332.

The protein belongs to the radical SAM superfamily. RlmN family. Requires [4Fe-4S] cluster as cofactor.

The protein localises to the cytoplasm. It carries out the reaction adenosine(2503) in 23S rRNA + 2 reduced [2Fe-2S]-[ferredoxin] + 2 S-adenosyl-L-methionine = 2-methyladenosine(2503) in 23S rRNA + 5'-deoxyadenosine + L-methionine + 2 oxidized [2Fe-2S]-[ferredoxin] + S-adenosyl-L-homocysteine. The enzyme catalyses adenosine(37) in tRNA + 2 reduced [2Fe-2S]-[ferredoxin] + 2 S-adenosyl-L-methionine = 2-methyladenosine(37) in tRNA + 5'-deoxyadenosine + L-methionine + 2 oxidized [2Fe-2S]-[ferredoxin] + S-adenosyl-L-homocysteine. Specifically methylates position 2 of adenine 2503 in 23S rRNA and position 2 of adenine 37 in tRNAs. This chain is Probable dual-specificity RNA methyltransferase RlmN, found in Clostridium botulinum (strain ATCC 19397 / Type A).